The primary structure comprises 800 residues: Internalin A (800 aa).

The N-terminal stretch at 1 to 35 is a signal peptide; that stretch reads MRKKRYVWLKSILVAILVFGSGVWINTSNGTNAQA. In terms of domain architecture, LRRNT spans 36–76; it reads ATITQDTPINQIFTDTALAEKMKTVLGKTNVTDTVSQTDLD. LRR repeat units lie at residues 77-98, 99-120, 121-142, 143-164, 165-186, 187-207, 208-229, 230-251, 252-273, 274-295, 296-317, 318-339, 340-361, 362-383, and 384-405; these read QVTTLQADRLGIKSIDGVEYLN, NLTQINFSNNQLTDITPLKNLT, KLVDILMNNNQIADITPLANLT, NLTGLTLFNNQITDIDPLKNLT, NLNRLELSSNTISDISALSGLT, SLQQLSFGNQVTDLKPLANLT, TLERLDISSNKVSDISVLAKLT, NLESLIATNNQISDITPLGILT, NLDELSLNGNQLKDIGTLASLT, NLTDLDLANNQISNLAPLSGLT, KLTELKLGANQISNISPLAGLT, ALTNLELNENQLEDISPISNLK, NLTYLTLYFNNISDISPVSSLT, KLQRLFFYNNKVSDVSSLANLT, and NINWLSAGHNQISDLTPLANLT. Residues 416–505 enclose the LRRCT domain; sequence AWTNAPVNYK…AIFNVKFHVD (90 aa). The B-1 repeat unit spans residues 518–587; that stretch reads LLTEPAKPVK…TTSQTVDYQG (70 aa). Positions 518-706 are 3 X approximate tandem repeats, type B; sequence LLTEPAKPVK…ITLYAQFTKN (189 aa). The stretch at 588-657 is one B-2 repeat; sequence LLQEPTAPTK…STTQAVDYQG (70 aa). Residues 658 to 706 form a B-3 repeat; that stretch reads LLKEPKAPTKAGYTFKGWYDEKTDGKKWDFATDKMPANDITLYAQFTKN. Residues 705–757 are disordered; that stretch reads KNPVAPPTTGGNTPPTTNNGGNTTPPSANIPGSDTSNTSTGNSASTTSTMNAY. Positions 711 to 753 are enriched in low complexity; the sequence is PTTGGNTPPTTNNGGNTTPPSANIPGSDTSNTSTGNSASTTST. The LPXTG sorting signal motif lies at 767-771; it reads LPTTG. At threonine 770 the chain carries Pentaglycyl murein peptidoglycan amidated threonine. The propeptide at 771 to 800 is removed by sortase A; that stretch reads GDSDNALYLLLGLLAVGTAMALTKKARASK.

This sequence belongs to the internalin family. In terms of assembly, interacts with host (human) cadherin-1 (CDH1). The formation of the complex between inlA and cadherin-1 is calcium-dependent. Mutagenesis studies show it is possible to increase the affinity of InlA for CDH1 by rational engineering of InlA residues.

The protein resides in the secreted. It is found in the cell wall. With respect to regulation, bacterial uptake is inhibited by EDTA and by anti-E-cadherin antibodies. Functionally, mediates the entry of L.monocytogenes into host intestinal epithelial cells; transformation with inlA alone allows L.innocua (a non-invasive species) to be taken up by host cells. Binds to human receptor cadherin-1 (E-cadherin, CDH1); the chicken homolog of cadherin-1 but not cadherin-2 function as receptors. Mouse cadherin-1 is not a receptor, however mutating a single surface-exposed residue (Glu-172 to Pro in mouse) allows cadherin-1 to act as a receptor for InlA. This Listeria monocytogenes serovar 1/2a (strain ATCC BAA-679 / EGD-e) protein is Internalin A.